The sequence spans 339 residues: Anthranilate phosphoribosyltransferase (339 aa).

5-phospho-alpha-D-ribose 1-diphosphate contacts are provided by residues Gly81, 84-85 (GD), Ser89, 91-94 (NVSS), 109-117 (KHGNRALSS), and Ala121. Gly81 contacts anthranilate. Mg(2+) is bound at residue Ser93. Asn112 is a binding site for anthranilate. An anthranilate-binding site is contributed by Arg167. Positions 225 and 226 each coordinate Mg(2+).

It belongs to the anthranilate phosphoribosyltransferase family. In terms of assembly, homodimer. Mg(2+) is required as a cofactor.

The enzyme catalyses N-(5-phospho-beta-D-ribosyl)anthranilate + diphosphate = 5-phospho-alpha-D-ribose 1-diphosphate + anthranilate. It participates in amino-acid biosynthesis; L-tryptophan biosynthesis; L-tryptophan from chorismate: step 2/5. Catalyzes the transfer of the phosphoribosyl group of 5-phosphorylribose-1-pyrophosphate (PRPP) to anthranilate to yield N-(5'-phosphoribosyl)-anthranilate (PRA). This Brucella ovis (strain ATCC 25840 / 63/290 / NCTC 10512) protein is Anthranilate phosphoribosyltransferase.